A 246-amino-acid polypeptide reads, in one-letter code: Bis(5'-nucleosyl)-tetraphosphatase PrpE [asymmetrical] (246 aa).

The protein belongs to the PrpE family. It depends on Ni(2+) as a cofactor.

The catalysed reaction is P(1),P(4)-bis(5'-guanosyl) tetraphosphate + H2O = GMP + GTP + 2 H(+). Its function is as follows. Asymmetrically hydrolyzes Ap4p to yield AMP and ATP. This is Bis(5'-nucleosyl)-tetraphosphatase PrpE [asymmetrical] from Bacillus cereus (strain ATCC 14579 / DSM 31 / CCUG 7414 / JCM 2152 / NBRC 15305 / NCIMB 9373 / NCTC 2599 / NRRL B-3711).